The chain runs to 168 residues: Phosphopantetheine adenylyltransferase (168 aa).

T11 contacts substrate. Residues 11-12 (TF) and H19 contribute to the ATP site. Substrate-binding residues include K43, T75, and R89. ATP-binding positions include 90-92 (GIR), E100, and 125-131 (WSYMSSS).

Belongs to the bacterial CoaD family. In terms of assembly, homohexamer. Mg(2+) serves as cofactor.

Its subcellular location is the cytoplasm. It carries out the reaction (R)-4'-phosphopantetheine + ATP + H(+) = 3'-dephospho-CoA + diphosphate. It participates in cofactor biosynthesis; coenzyme A biosynthesis; CoA from (R)-pantothenate: step 4/5. In terms of biological role, reversibly transfers an adenylyl group from ATP to 4'-phosphopantetheine, yielding dephospho-CoA (dPCoA) and pyrophosphate. The protein is Phosphopantetheine adenylyltransferase of Wigglesworthia glossinidia brevipalpis.